We begin with the raw amino-acid sequence, 75 residues long: Small ribosomal subunit protein eS17 (75 aa).

It belongs to the eukaryotic ribosomal protein eS17 family.

This Thermoplasma volcanium (strain ATCC 51530 / DSM 4299 / JCM 9571 / NBRC 15438 / GSS1) protein is Small ribosomal subunit protein eS17.